The primary structure comprises 93 residues: Small ribosomal subunit protein uS19c (93 aa).

The tract at residues Glu73 to Pro93 is disordered. Residues Phe80–Pro93 show a composition bias toward basic residues.

The protein belongs to the universal ribosomal protein uS19 family.

It localises to the plastid. The protein localises to the chloroplast. Functionally, protein S19 forms a complex with S13 that binds strongly to the 16S ribosomal RNA. The polypeptide is Small ribosomal subunit protein uS19c (rps19) (Mesostigma viride (Green alga)).